Here is an 82-residue protein sequence, read N- to C-terminus: Mu-conotoxin MrVIB (82 aa).

A signal peptide spans 1–22 (MKLTCMMIVAVLFLTAWTLVMA). The propeptide occupies 23-49 (DDSNNGLANHFLKSRDEMEDPEASKLE). Disulfide bonds link C53/C71, C60/C76, and C70/C81.

Belongs to the conotoxin O1 superfamily. In terms of tissue distribution, expressed by the venom duct.

It localises to the secreted. Its function is as follows. MuO-conotoxins are gating-modifier toxins that inhibit sodium current by trapping the domain II voltage sensor in the closed position to prevent opening of the sodium channel. This toxin has a preference for Nav1.4/SCN4A over Nav1.2/SCN2A sodium channels. It blocks Nav channels by interacting mainly with the C-terminal part of the pore loop of domain-3. It also blocks fast-inactivating calcium current. Blocks Nav1.8/SCN10A sodium channels and has potent and long-lasting local anesthetic effects. It can also block propagation of action potentials in A- and C-fibers in sciatic nerve as well as skeletal muscle in isolated preparations. This Conus marmoreus (Marble cone) protein is Mu-conotoxin MrVIB.